A 475-amino-acid polypeptide reads, in one-letter code: METKLSLKKRLQQFSKKQLIALIILGAADVFVIAAPYYIKNVVPNLHLYLGITEDEVATLTSIIGYVTLATQLPGGFLANRFSSRKLLFLSEISTGVITFWLATNILTRESQKSNALFVQYCVIWGLWGITSTLIFWTPLWKLASQQATQENQALGFGIQGAANGVWGFIFIFLIALIITAVAYPAGGESSANNPAPFAIYAFIIGGMLLVTGFTVLFFVPEKPIEKYDSHTSLKTAKKNFEQILITLKNWKLWLLSFFLMGMYVFQSTFAYYLLQMMQNAFLAPVILGTVLGGVRTYVLRSAVSVYLGRLADKFRSYILFLMLCTGLGIIFVLMFILLGFGQVGQQQNYALIIVSAILYILTGVLSWGMVTVRYNQVAEIEIGKNNYASSVGLLSFIGFSTDGWLYTVTSVVGKAYTPDGQKNTSIQGYQIIAAICLGIALFGLLCGTIVFLVNTWELKRLGKTDYRWRTLDNA.

This sequence to E.coli YihN.

This is an uncharacterized protein from Mycoplasma pneumoniae (strain ATCC 29342 / M129 / Subtype 1) (Mycoplasmoides pneumoniae).